Consider the following 85-residue polypeptide: Protein MANBAL (85 aa).

A helical membrane pass occupies residues 24–44 (YGLFLGAIFQLICVLAIIVPI). A compositionally biased stretch (basic and acidic residues) spans 49–64 (EAEAEQAEPRSAEGPK). The disordered stretch occupies residues 49 to 85 (EAEAEQAEPRSAEGPKKPKAAIASTNKRPKKETKKKR). Over residues 75 to 85 (KRPKKETKKKR) the composition is skewed to basic residues.

It belongs to the UPF0239 family.

The protein resides in the membrane. The sequence is that of Protein MANBAL (Manbal) from Mus musculus (Mouse).